Consider the following 201-residue polypeptide: Holliday junction branch migration complex subunit RuvA (201 aa).

Residues 1 to 61 (MIEFVKGTID…EDAFSLYGFS (61 aa)) are domain I. A domain II region spans residues 62-140 (TREEKALFTK…DVVPEMIDNL (79 aa)). A flexible linker region spans residues 141–150 (FNHEARIEKQ). The segment at 151 to 201 (EAETALDEALEALRVLGYAEKEIKKVLPHLKEETALSTDQYVKKALQKLLK) is domain III.

It belongs to the RuvA family. As to quaternary structure, homotetramer. Forms an RuvA(8)-RuvB(12)-Holliday junction (HJ) complex. HJ DNA is sandwiched between 2 RuvA tetramers; dsDNA enters through RuvA and exits via RuvB. An RuvB hexamer assembles on each DNA strand where it exits the tetramer. Each RuvB hexamer is contacted by two RuvA subunits (via domain III) on 2 adjacent RuvB subunits; this complex drives branch migration. In the full resolvosome a probable DNA-RuvA(4)-RuvB(12)-RuvC(2) complex forms which resolves the HJ.

It localises to the cytoplasm. The RuvA-RuvB-RuvC complex processes Holliday junction (HJ) DNA during genetic recombination and DNA repair, while the RuvA-RuvB complex plays an important role in the rescue of blocked DNA replication forks via replication fork reversal (RFR). RuvA specifically binds to HJ cruciform DNA, conferring on it an open structure. The RuvB hexamer acts as an ATP-dependent pump, pulling dsDNA into and through the RuvAB complex. HJ branch migration allows RuvC to scan DNA until it finds its consensus sequence, where it cleaves and resolves the cruciform DNA. The chain is Holliday junction branch migration complex subunit RuvA from Bacillus velezensis (strain DSM 23117 / BGSC 10A6 / LMG 26770 / FZB42) (Bacillus amyloliquefaciens subsp. plantarum).